Reading from the N-terminus, the 318-residue chain is Thymidylate synthase (318 aa).

Residues arginine 25 and 180 to 181 (RR) each bind dUMP. Cysteine 200 serves as the catalytic Nucleophile. DUMP-binding positions include 220–223 (RSGD), asparagine 231, and 261–263 (HIY). (6R)-5,10-methylene-5,6,7,8-tetrahydrofolate is bound at residue aspartate 223. Alanine 317 lines the (6R)-5,10-methylene-5,6,7,8-tetrahydrofolate pocket.

This sequence belongs to the thymidylate synthase family. Bacterial-type ThyA subfamily. As to quaternary structure, homodimer.

The protein localises to the cytoplasm. The enzyme catalyses dUMP + (6R)-5,10-methylene-5,6,7,8-tetrahydrofolate = 7,8-dihydrofolate + dTMP. Its pathway is pyrimidine metabolism; dTTP biosynthesis. Catalyzes the reductive methylation of 2'-deoxyuridine-5'-monophosphate (dUMP) to 2'-deoxythymidine-5'-monophosphate (dTMP) while utilizing 5,10-methylenetetrahydrofolate (mTHF) as the methyl donor and reductant in the reaction, yielding dihydrofolate (DHF) as a by-product. This enzymatic reaction provides an intracellular de novo source of dTMP, an essential precursor for DNA biosynthesis. This is Thymidylate synthase from Bacillus cereus (strain ATCC 10987 / NRS 248).